Here is a 167-residue protein sequence, read N- to C-terminus: NADH-ubiquinone oxidoreductase chain 6 (167 aa).

4 helical membrane-spanning segments follow: residues 21–41 (SPYY…LLLL), 45–65 (IIFP…VVFI), 78–98 (PINL…ITMI), and 132–152 (SMFI…LEVV).

The protein belongs to the complex I subunit 6 family.

The protein resides in the mitochondrion membrane. It carries out the reaction a ubiquinone + NADH + 5 H(+)(in) = a ubiquinol + NAD(+) + 4 H(+)(out). Functionally, core subunit of the mitochondrial membrane respiratory chain NADH dehydrogenase (Complex I) that is believed to belong to the minimal assembly required for catalysis. Complex I functions in the transfer of electrons from NADH to the respiratory chain. The immediate electron acceptor for the enzyme is believed to be ubiquinone. This is NADH-ubiquinone oxidoreductase chain 6 (ND6) from Branchiostoma floridae (Florida lancelet).